We begin with the raw amino-acid sequence, 398 residues long: Acetate kinase (398 aa).

Asn-7 serves as a coordination point for Mg(2+). Position 14 (Lys-14) interacts with ATP. Residue Arg-96 coordinates substrate. Asp-153 acts as the Proton donor/acceptor in catalysis. ATP is bound by residues 210-214 (HLGNG), 284-286 (DLR), and 332-336 (GIGEH). Glu-385 lines the Mg(2+) pocket.

Belongs to the acetokinase family. In terms of assembly, homodimer. The cofactor is Mg(2+). Requires Mn(2+) as cofactor.

Its subcellular location is the cytoplasm. It carries out the reaction acetate + ATP = acetyl phosphate + ADP. It functions in the pathway metabolic intermediate biosynthesis; acetyl-CoA biosynthesis; acetyl-CoA from acetate: step 1/2. Its function is as follows. Catalyzes the formation of acetyl phosphate from acetate and ATP. Can also catalyze the reverse reaction. This chain is Acetate kinase, found in Acaryochloris marina (strain MBIC 11017).